Here is a 115-residue protein sequence, read N- to C-terminus: Large ribosomal subunit protein bL20 (115 aa).

The protein belongs to the bacterial ribosomal protein bL20 family.

In terms of biological role, binds directly to 23S ribosomal RNA and is necessary for the in vitro assembly process of the 50S ribosomal subunit. It is not involved in the protein synthesizing functions of that subunit. This chain is Large ribosomal subunit protein bL20, found in Malacoplasma penetrans (strain HF-2) (Mycoplasma penetrans).